A 267-amino-acid polypeptide reads, in one-letter code: MTFGKALLKISRQGEHARIWEYSQAPLQWLGSPGEPPLYYLRNPNGGLLGGDRHHIAIELGAGAGLAIRTQGATRLHPGLIRQQAKVKLAPTSQLIWIPHPTIPGAGADFRQQVQIELDPSARLAYAEIWTAGRLAMGECWQFRRLSSSLRVWVAAGSPSASRQKKLWLQEHIDLRFPHQHVSTASVLGSHLCWGSLYLLGDWPEPTWPTVHVSGTESPHWLVKSPDPVCQGWILRQVGPQAEAIWQQFGQVVQQLAAAQRSSSQGW.

This sequence belongs to the UreD family. In terms of assembly, ureD, UreF and UreG form a complex that acts as a GTP-hydrolysis-dependent molecular chaperone, activating the urease apoprotein by helping to assemble the nickel containing metallocenter of UreC. The UreE protein probably delivers the nickel.

It localises to the cytoplasm. Its function is as follows. Required for maturation of urease via the functional incorporation of the urease nickel metallocenter. The sequence is that of Urease accessory protein UreD 2 from Synechococcus sp. (strain JA-3-3Ab) (Cyanobacteria bacterium Yellowstone A-Prime).